The following is a 436-amino-acid chain: Protein PhoH2 (436 aa).

In terms of domain architecture, PINc spans 12–137 (RTYVLDTSVL…LVSKDLPMRL (126 aa)).

The protein in the N-terminal section; belongs to the PINc/VapC protein family. In the C-terminal section; belongs to the PhoH family.

The enzyme catalyses n ATP + n H2O + wound RNA = n ADP + n phosphate + unwound RNA.. It carries out the reaction ATP + H2O = ADP + phosphate + H(+). The catalysed reaction is GTP + H2O = GDP + phosphate + H(+). Its function is as follows. Unwinds and/or cleaves 5'-tailed RNA in vitro, the reaction is maximal with hydrolyzable ATP; double-stranded (ds)RNA and dsDNA are not unwound. Unlike the protein in mycobacteria there does not seem to be an antitoxin gene upstream, suggesting this is not a toxin-antitoxin system. Has ATPase and GTPase activities. The protein is Protein PhoH2 of Thermobispora bispora (strain ATCC 19993 / DSM 43833 / CBS 139.67 / JCM 10125 / KCTC 9307 / NBRC 14880 / R51).